A 453-amino-acid chain; its full sequence is tRNA (guanine-N(7)-)-methyltransferase non-catalytic subunit TRM82 (453 aa).

A disordered region spans residues 69 to 99 (ENEEKGIKKSKTNEGNTIEKKHDAKIPVPGP). WD repeat units lie at residues 103–143 (PIYS…NDNC) and 244–286 (GHKE…DEFD).

Belongs to the WD repeat TRM82 family. In terms of assembly, forms a heterodimer with the catalytic subunit TRM8.

The protein localises to the nucleus. Its pathway is tRNA modification; N(7)-methylguanine-tRNA biosynthesis. Its function is as follows. Required for the formation of N(7)-methylguanine at position 46 (m7G46) in tRNA. In the complex, it is required to stabilize and induce conformational changes of the catalytic subunit. The protein is tRNA (guanine-N(7)-)-methyltransferase non-catalytic subunit TRM82 of Vanderwaltozyma polyspora (strain ATCC 22028 / DSM 70294 / BCRC 21397 / CBS 2163 / NBRC 10782 / NRRL Y-8283 / UCD 57-17) (Kluyveromyces polysporus).